The sequence spans 160 residues: F-box protein At1g15015 (160 aa).

In terms of domain architecture, F-box spans 1–44 (MDVTLPHHVVEDILERLPVKTLRKFKCVCSTWRSTIDSQRFKDR).

In Arabidopsis thaliana (Mouse-ear cress), this protein is F-box protein At1g15015.